Reading from the N-terminus, the 643-residue chain is 3D-(3,5/4)-trihydroxycyclohexane-1,2-dione hydrolase (643 aa).

Glu65 lines the thiamine diphosphate pocket. A thiamine pyrophosphate binding region spans residues 441 to 521 (SLPGDLQRMW…VNVLLFDNCG (81 aa)). 2 residues coordinate Mg(2+): Asp492 and Asn519.

Belongs to the TPP enzyme family. It depends on Mg(2+) as a cofactor. Thiamine diphosphate serves as cofactor.

It catalyses the reaction 3D-3,5/4-trihydroxycyclohexane-1,2-dione + H2O = 5-deoxy-D-glucuronate + H(+). Its pathway is polyol metabolism; myo-inositol degradation into acetyl-CoA; acetyl-CoA from myo-inositol: step 3/7. Its function is as follows. Involved in the cleavage of the C1-C2 bond of 3D-(3,5/4)-trihydroxycyclohexane-1,2-dione (THcHDO) to yield 5-deoxy-glucuronate (5DG). The chain is 3D-(3,5/4)-trihydroxycyclohexane-1,2-dione hydrolase from Clostridium botulinum (strain Alaska E43 / Type E3).